We begin with the raw amino-acid sequence, 251 residues long: Large ribosomal subunit protein uL3 (251 aa).

Glutamine 151 bears the N5-methylglutamine mark. A disordered region spans residues 221–251 (GLKQAANSNDSAAADTPAEVAAVEATEGQEG). The span at 225-251 (AANSNDSAAADTPAEVAAVEATEGQEG) shows a compositional bias: low complexity.

It belongs to the universal ribosomal protein uL3 family. In terms of assembly, part of the 50S ribosomal subunit. Forms a cluster with proteins L14 and L19. Post-translationally, methylated by PrmB.

One of the primary rRNA binding proteins, it binds directly near the 3'-end of the 23S rRNA, where it nucleates assembly of the 50S subunit. The sequence is that of Large ribosomal subunit protein uL3 from Novosphingobium aromaticivorans (strain ATCC 700278 / DSM 12444 / CCUG 56034 / CIP 105152 / NBRC 16084 / F199).